Here is an 891-residue protein sequence, read N- to C-terminus: Aconitate hydratase A (891 aa).

Positions 435, 501, and 504 each coordinate [4Fe-4S] cluster.

Belongs to the aconitase/IPM isomerase family. Monomer. [4Fe-4S] cluster is required as a cofactor.

It catalyses the reaction citrate = D-threo-isocitrate. It carries out the reaction (2S,3R)-3-hydroxybutane-1,2,3-tricarboxylate = 2-methyl-cis-aconitate + H2O. It participates in carbohydrate metabolism; tricarboxylic acid cycle; isocitrate from oxaloacetate: step 2/2. Its pathway is organic acid metabolism; propanoate degradation. Functionally, involved in the catabolism of short chain fatty acids (SCFA) via the tricarboxylic acid (TCA)(acetyl degradation route) and probably the 2-methylcitrate cycle I (propionate degradation route). Catalyzes the reversible isomerization of citrate to isocitrate via cis-aconitate. The apo form of AcnA functions as a RNA-binding regulatory protein. Could catalyze the hydration of 2-methyl-cis-aconitate to yield (2R,3S)-2-methylisocitrate. This is Aconitate hydratase A (acn) from Legionella pneumophila subsp. pneumophila (strain Philadelphia 1 / ATCC 33152 / DSM 7513).